We begin with the raw amino-acid sequence, 217 residues long: 3,4-dihydroxy-2-butanone 4-phosphate synthase (217 aa).

D-ribulose 5-phosphate-binding positions include 37-38 (RE), Asp-42, 150-154 (RRGHT), and Glu-174. A Mg(2+)-binding site is contributed by Glu-38. Residue His-153 participates in Mg(2+) binding.

This sequence belongs to the DHBP synthase family. As to quaternary structure, homodimer. Mg(2+) is required as a cofactor. Mn(2+) serves as cofactor.

It catalyses the reaction D-ribulose 5-phosphate = (2S)-2-hydroxy-3-oxobutyl phosphate + formate + H(+). It functions in the pathway cofactor biosynthesis; riboflavin biosynthesis; 2-hydroxy-3-oxobutyl phosphate from D-ribulose 5-phosphate: step 1/1. Its function is as follows. Catalyzes the conversion of D-ribulose 5-phosphate to formate and 3,4-dihydroxy-2-butanone 4-phosphate. The polypeptide is 3,4-dihydroxy-2-butanone 4-phosphate synthase (Pseudoalteromonas translucida (strain TAC 125)).